We begin with the raw amino-acid sequence, 135 residues long: Putative pre-16S rRNA nuclease (135 aa).

It belongs to the YqgF nuclease family.

It is found in the cytoplasm. In terms of biological role, could be a nuclease involved in processing of the 5'-end of pre-16S rRNA. This Clostridium novyi (strain NT) protein is Putative pre-16S rRNA nuclease.